Here is an 834-residue protein sequence, read N- to C-terminus: Structure-specific endonuclease subunit SLX4 (834 aa).

Disordered stretches follow at residues R80–T105, T272–K307, Q332–V372, G401–A421, E603–L649, and A720–P740. The span at P279–Q295 shows a compositional bias: polar residues. Over residues Q296–K305 the composition is skewed to basic residues. Polar residues-rich tracts occupy residues S345–N366 and D412–A421. The segment covering D611 to P630 has biased composition (basic and acidic residues). Residues Q729–P740 are compositionally biased toward low complexity.

Belongs to the SLX4 family. Forms a heterodimer with SLX1. In terms of processing, phosphorylated in response to DNA damage.

The protein resides in the nucleus. Functionally, regulatory subunit of the SLX1-SLX4 structure-specific endonuclease that resolves DNA secondary structures generated during DNA repair and recombination. Has endonuclease activity towards branched DNA substrates, introducing single-strand cuts in duplex DNA close to junctions with ss-DNA. This Ajellomyces capsulatus (strain NAm1 / WU24) (Darling's disease fungus) protein is Structure-specific endonuclease subunit SLX4.